Consider the following 224-residue polypeptide: Small ribosomal subunit protein uS3 (224 aa).

The region spanning 39–107 (IREFLKKKPS…DVWVEIAEVK (69 aa)) is the KH type-2 domain.

The protein belongs to the universal ribosomal protein uS3 family. As to quaternary structure, part of the 30S ribosomal subunit. Forms a tight complex with proteins S10 and S14.

Binds the lower part of the 30S subunit head. Binds mRNA in the 70S ribosome, positioning it for translation. This chain is Small ribosomal subunit protein uS3, found in Chlamydia muridarum (strain MoPn / Nigg).